The chain runs to 151 residues: MAKRVKVALTESIASLGKEGDLVEVAPGYARNFLLPYGKAMNVTPAVLKQIERKKEKEKIAADKLKQEALDFQTALSTIGRFTIKKQVGEDGVLFGTVTNGDVAEAIEAATKKEIDRRNITVPDIHNLGSFTAKIKLHPDVNAEVNIEVTS.

It belongs to the bacterial ribosomal protein bL9 family.

Its function is as follows. Binds to the 23S rRNA. The sequence is that of Large ribosomal subunit protein bL9 from Prochlorococcus marinus (strain MIT 9312).